The sequence spans 187 residues: Ribosome-recycling factor (187 aa).

The protein belongs to the RRF family.

Its subcellular location is the cytoplasm. In terms of biological role, responsible for the release of ribosomes from messenger RNA at the termination of protein biosynthesis. May increase the efficiency of translation by recycling ribosomes from one round of translation to another. The chain is Ribosome-recycling factor from Methylorubrum populi (strain ATCC BAA-705 / NCIMB 13946 / BJ001) (Methylobacterium populi).